The chain runs to 370 residues: Protein RKD5 (370 aa).

Residues 193 to 232 (DSETESEESVNEKTEHSEFENDKTEQSESDAKTEILKKKK) form a disordered region. Residues 202–228 (VNEKTEHSEFENDKTEQSESDAKTEIL) show a composition bias toward basic and acidic residues. The RWP-RK domain maps to 224 to 309 (KTEILKKKKR…AEKQQEKNEA (86 aa)). Residues 283–328 (HRKIKSLDCLIHDLQREAEKQQEKNEAAAMAVAKKQEKLETEKRNI) adopt a coiled-coil conformation. Residues 347-370 (NFKKRHRASRAKKNQESLVTSSST) form a disordered region. A compositionally biased stretch (basic residues) spans 349–358 (KKRHRASRAK).

The protein localises to the nucleus. Its function is as follows. Putative transcription factor. This Arabidopsis thaliana (Mouse-ear cress) protein is Protein RKD5 (RKD5).